Reading from the N-terminus, the 445-residue chain is Methionine aminopeptidase 2-1 (445 aa).

Residues 1–99 (MAAQVPTEAL…FPNKAYPKGE (99 aa)) form a disordered region. A compositionally biased stretch (basic residues) spans 61 to 75 (KKKKKRKPKKKKKHP). H198 serves as a coordination point for substrate. 3 residues coordinate a divalent metal cation: D218, D229, and H298. Residue H306 participates in substrate binding. The a divalent metal cation site is built by E331 and E426.

It belongs to the peptidase M24A family. Methionine aminopeptidase eukaryotic type 2 subfamily. Co(2+) is required as a cofactor. Requires Zn(2+) as cofactor. It depends on Mn(2+) as a cofactor. The cofactor is Fe(2+).

It localises to the cytoplasm. The enzyme catalyses Release of N-terminal amino acids, preferentially methionine, from peptides and arylamides.. Functionally, cotranslationally removes the N-terminal methionine from nascent proteins. The N-terminal methionine is often cleaved when the second residue in the primary sequence is small and uncharged (Met-Ala-, Cys, Gly, Pro, Ser, Thr, or Val). This is Methionine aminopeptidase 2-1 from Fusarium vanettenii (strain ATCC MYA-4622 / CBS 123669 / FGSC 9596 / NRRL 45880 / 77-13-4) (Fusarium solani subsp. pisi).